The primary structure comprises 126 residues: MAILGLGTDIVEIARIESVIARSGERLARRVLSDNEWAIWKTHHQPVRFLAKRFAVKEAAAKAFGTGIRNGLAFNQFEVFNDELGKPRLRLWGEALKLAEKLGVVNMHVTLADERHYACATVIIES.

Residues D9 and E58 each coordinate Mg(2+).

This sequence belongs to the P-Pant transferase superfamily. AcpS family. The cofactor is Mg(2+).

It is found in the cytoplasm. The catalysed reaction is apo-[ACP] + CoA = holo-[ACP] + adenosine 3',5'-bisphosphate + H(+). In terms of biological role, transfers the 4'-phosphopantetheine moiety from coenzyme A to a Ser of acyl-carrier-protein. This is Holo-[acyl-carrier-protein] synthase from Escherichia coli O17:K52:H18 (strain UMN026 / ExPEC).